The primary structure comprises 396 residues: MVRLIHLIGAIILLFSYAYCGLSRLNEHDIEESYSHKRVKRQFERLGTKWSYGVVNYYYADKNNEIKEMVESAIAYIANHTCIRFNEDQNAVQRVQIRMQQNWLCQSTVGAPGMSMSKPIGELSMLVQSCDTIGSIVHEFSHSLGRFHEHTRPDRDNFMKVTTTVHEARPRPSGMTTMYGPFEHGSVMMYHADTYGPGTMDPLDMDYKQTMGNRRVTFYDMYKINQYYGCWCSKQLECKNGGYTSPSDCSRCNCPKGFFGNLCDERQQDSYELMAVNNLWQSITIPFAYKPEPGSDGFYSTFVYITGKANSTIEITLEGLQDVICTAGCTVNGVEIKFKEDSKITSPVVCCTDKPPYKNVFKSSHNPTIIELYSRTTLPSAVTFKYRFTNDKVVLG.

The first 20 residues, 1–20 (MVRLIHLIGAIILLFSYAYC), serve as a signal peptide directing secretion. A Peptidase M12A domain is found at 38-231 (RVKRQFERLG…YKINQYYGCW (194 aa)). An N-linked (GlcNAc...) asparagine glycan is attached at Asn-79. Cystine bridges form between Cys-82–Cys-230, Cys-105–Cys-130, Cys-232–Cys-252, and Cys-254–Cys-263. His-138 provides a ligand contact to Zn(2+). Glu-139 is an active-site residue. Residues His-142 and His-148 each contribute to the Zn(2+) site. One can recognise an EGF-like domain in the interval 225–264 (NQYYGCWCSKQLECKNGGYTSPSDCSRCNCPKGFFGNLCD). Residue Asn-310 is glycosylated (N-linked (GlcNAc...) asparagine).

Zn(2+) is required as a cofactor.

The protein localises to the secreted. In terms of biological role, metalloprotease. This chain is Zinc metalloproteinase nas-19 (nas-19), found in Caenorhabditis elegans.